We begin with the raw amino-acid sequence, 1212 residues long: Peregrin (1212 aa).

The C2H2-type zinc-finger motif lies at 21–47 (YECPVETCRKVYKSYSGIEYHLYHYDH). Disordered stretches follow at residues 43–87 (YHYD…SPGR) and 118–176 (VVSE…PKLP). The segment covering 58-67 (LRKHKKKGRQ) has biased composition (basic residues). An interaction with KAT6A and KAT6B region spans residues 59-221 (RKHKKKGRQS…VEYDMDEEDY (163 aa)). Low complexity predominate over residues 74–85 (QSPSPSEVSQSP). Positions 119 to 130 (VSEDEEAPEEAP) are enriched in acidic residues. Residue S120 is modified to Phosphoserine. N6-acetyllysine is present on K147. Over residues 148-166 (SGKHKNKEKRKDSNHHHHS) the composition is skewed to basic residues. S237 is modified (phosphoserine). The PHD-type 1 zinc-finger motif lies at 272–322 (DAVCCICNDGECQNSNVILFCDMCNLAVHQECYGVPYIPEGQWLCRRCLQS). A C2HC pre-PHD-type zinc finger spans residues 326 to 359 (AVDCALCPNKGGAFKQTDDGRWAHVVCALWIPEV). The segment at 383-447 (LTCYICKQRG…RKTAYCDIHT (65 aa)) adopts a PHD-type 2 zinc-finger fold. The disordered stretch occupies residues 447–489 (TPPGSARRLPALSHSEGEEEEDEEEDEGKSWSSEKVKKAKAKS). Residues S459 and S461 each carry the phosphoserine modification. The segment covering 463–473 (GEEEEDEEEDE) has biased composition (acidic residues). The segment at 500 to 819 (LAEKRAAAPV…IKKEMTALRR (320 aa)) is interaction with MEAF6 and ING5. Residues 542–1077 (YWTLKRQSRN…RGAGWLSEDE (536 aa)) are required for RUNX1 and RUNX2 transcriptional activation. At K579 the chain carries N6-acetyllysine. Residues 627 to 731 (MQLTPFLILL…EQGGAVLRQA (105 aa)) form the Bromo domain. A disordered region spans residues 817–1060 (LRRKLAHQRE…VGTGRGVGHS (244 aa)). Basic and acidic residues predominate over residues 823-836 (HQRETGRDGPERHG). The residue at position 856 (T856) is a Phosphothreonine. The span at 856–869 (TDSAAEESSSQETS) shows a compositional bias: low complexity. S858, S915, S920, and S924 each carry phosphoserine. The span at 993-1019 (PRSSSDSESSSSSSSSAASDRTSTTPS) shows a compositional bias: low complexity. S1074 bears the Phosphoserine mark. Residues 1083–1166 (ALDLVWAKCR…RTKLVPLGVN (84 aa)) form the PWWP domain. S1185 carries the post-translational modification Phosphoserine.

Component of some HBO1 complex composed of KAT7/HBO1, MEAF6, ING5, and BRPF1. Component of the MOZ/MORF complex composed at least of ING5, KAT6A, KAT6B, MEAF6 and one of BRPF1, BRD1/BRPF2 and BRPF3. Interacts (via PHD-type zinc finger domains) with unmethylated histone H3 at 'Lys-4' (H3K4me0). Interacts with trimethylated 'Lys-36' of histone H3 (H3K36me3). Interacts with ING5; interaction directs BRPF1 to H4K4me3-enriched chromatin at the 5' of active genes. Interacts with KAT7. Acetylated by KAT6A. As to expression, expressed at low level in most tissues, with high expression in the testis and specific regions of the brain.

It localises to the nucleus. The protein localises to the chromosome. The protein resides in the cytoplasm. In terms of biological role, scaffold subunit of various histone acetyltransferase (HAT) complexes, such as the MOZ/MORF and HBO1 complexes, which have a histone H3 acetyltransferase activity. Plays a key role in HBO1 complex by directing KAT7/HBO1 specificity towards histone H3 'Lys-14' acetylation (H3K14ac). Some HAT complexes preferentially mediate histone H3 'Lys-23' (H3K23ac) acetylation. Positively regulates the transcription of RUNX1 and RUNX2. This is Peregrin from Mus musculus (Mouse).